Reading from the N-terminus, the 84-residue chain is Exodeoxyribonuclease 7 small subunit (84 aa).

This sequence belongs to the XseB family. As to quaternary structure, heterooligomer composed of large and small subunits.

It is found in the cytoplasm. The catalysed reaction is Exonucleolytic cleavage in either 5'- to 3'- or 3'- to 5'-direction to yield nucleoside 5'-phosphates.. In terms of biological role, bidirectionally degrades single-stranded DNA into large acid-insoluble oligonucleotides, which are then degraded further into small acid-soluble oligonucleotides. The polypeptide is Exodeoxyribonuclease 7 small subunit (Herminiimonas arsenicoxydans).